A 428-amino-acid polypeptide reads, in one-letter code: Beta-1,3-galactosyl-O-glycosyl-glycoprotein beta-1,6-N-acetylglucosaminyltransferase (428 aa).

Residues methionine 1 to arginine 9 lie on the Cytoplasmic side of the membrane. The interval leucine 5–arginine 9 is mediates interaction with GOLPH3 and is necessary and sufficient for localization to the Golgi. Residues leucine 10–leucine 32 form a helical; Signal-anchor for type II membrane protein membrane-spanning segment. Residues arginine 33–phenylalanine 121 form a stem region region. Residues arginine 33–histidine 428 lie on the Lumenal side of the membrane. Residues asparagine 58 and asparagine 95 are each glycosylated (N-linked (GlcNAc...) asparagine). 4 disulfides stabilise this stretch: cysteine 59/cysteine 413, cysteine 100/cysteine 172, cysteine 151/cysteine 199, and cysteine 372/cysteine 381. Residues proline 122–histidine 428 are catalytic. UDP-N-acetyl-alpha-D-glucosamine is bound by residues valine 128–histidine 130, aspartate 155–lysine 157, and tyrosine 187. Glutamate 243, lysine 251, arginine 254, glutamate 320, lysine 341, and tyrosine 358 together coordinate a glycoprotein. The Nucleophile role is filled by glutamate 320. UDP-N-acetyl-alpha-D-glucosamine-binding residues include arginine 378 and lysine 401.

It belongs to the glycosyltransferase 14 family. In terms of assembly, interacts with GOLPH3; may control GCNT1 retention in the Golgi. As to expression, highly expressed in activated T-lymphocytes and myeloid cells.

The protein localises to the golgi apparatus membrane. It carries out the reaction a 3-O-[beta-D-galactosyl-(1-&gt;3)-N-acetyl-alpha-D-galactosaminyl]-L-seryl-[protein] + UDP-N-acetyl-alpha-D-glucosamine = 3-O-{beta-D-galactosyl-(1-&gt;3)-[N-acetyl-beta-D-glucosaminyl-(1-&gt;6)]-N-acetyl-alpha-D-galactosaminyl}-L-seryl-[protein] + UDP + H(+). The catalysed reaction is a 3-O-[beta-D-galactosyl-(1-&gt;3)-N-acetyl-alpha-D-galactosaminyl]-L-threonyl-[protein] + UDP-N-acetyl-alpha-D-glucosamine = a 3-O-{beta-D-galactosyl-(1-&gt;3)-[N-acetyl-beta-D-glucosaminyl-(1-&gt;6)]-N-acetyl-alpha-D-galactosaminyl}-L-threonyl-[protein] + UDP + H(+). It catalyses the reaction a globoside GalGb4Cer + UDP-N-acetyl-alpha-D-glucosamine = a globoside GlcNAc-(beta1-&gt;6)-GalGb4Cer + UDP + H(+). The enzyme catalyses a ganglioside GA1 + UDP-N-acetyl-alpha-D-glucosamine = a ganglioside beta-D-GlcNAc-(1-&gt;6)-GA1 + UDP + H(+). It functions in the pathway protein modification; protein glycosylation. The protein operates within glycolipid biosynthesis. In terms of biological role, glycosyltransferase that catalyzes the transfer of an N-acetylglucosamine (GlcNAc) moiety in beta1-6 linkage from UDP-GlcNAc onto mucin-type core 1 O-glycan to form the branched mucin-type core 2 O-glycan. The catalysis is metal ion-independent and occurs with inversion of the anomeric configuration of sugar donor. Selectively involved in synthesis of mucin-type core 2 O-glycans that serve as scaffolds for the display of selectin ligand sialyl Lewis X epitope by myeloid cells, with an impact on homeostasis and recruitment to inflammatory sites. Can also act on glycolipid substrates. Transfers GlcNAc moiety to GalGb4Cer globosides in a reaction step to the synthesis of stage-specific embryonic antigen 1 (SSEA-1) determinant. Can use Galbeta1-3GalNAcalpha1- and Galbeta1-3GalNAcbeta1- oligosaccharide derivatives as acceptor substrates. This Homo sapiens (Human) protein is Beta-1,3-galactosyl-O-glycosyl-glycoprotein beta-1,6-N-acetylglucosaminyltransferase (GCNT1).